The chain runs to 331 residues: Phosphoenolpyruvate transferase (331 aa).

A 7,8-didemethyl-8-hydroxy-5-deazariboflavin-binding site is contributed by Asp-63.

Belongs to the CofD family. In terms of assembly, homodimer. It depends on Mg(2+) as a cofactor.

The enzyme catalyses enolpyruvoyl-2-diphospho-5'-guanosine + 7,8-didemethyl-8-hydroxy-5-deazariboflavin = dehydro coenzyme F420-0 + GMP + H(+). It participates in cofactor biosynthesis; coenzyme F420 biosynthesis. Functionally, catalyzes the transfer of the phosphoenolpyruvate moiety from enoylpyruvoyl-2-diphospho-5'-guanosine (EPPG) to 7,8-didemethyl-8-hydroxy-5-deazariboflavin (FO) with the formation of dehydro coenzyme F420-0 and GMP. This chain is Phosphoenolpyruvate transferase, found in Mycobacterium bovis (strain ATCC BAA-935 / AF2122/97).